The chain runs to 78 residues: Neurogranin (78 aa).

Position 1 is an N-acetylmethionine (methionine 1). The IQ domain occupies 26–49 (ANAAAAKIQASFRGHMARKKIKSG). Serine 36 carries the phosphoserine; by PHK and PKC modification. Positions 38–78 (RGHMARKKIKSGERGRKGPGPGGPGGAGGARGGAGGGPSGD) are disordered. The Collagen-like domain maps to 50-78 (ERGRKGPGPGGPGGAGGARGGAGGGPSGD). Residues 55-78 (GPGPGGPGGAGGARGGAGGGPSGD) are compositionally biased toward gly residues. Arginine 68 is subject to Citrulline; partial. Position 68 is an omega-N-methylarginine (arginine 68).

This sequence belongs to the neurogranin family. In terms of processing, the N-terminus is blocked. Phosphorylated at Ser-36 by PHK and PKC. Phosphorylation prevents interaction with Calmodulin and interrupts several learning- and memory-associated functions. Is highly enriched in brain. Accumulates postsynaptically in dendritic spines of neostriatal neurons.

Acts as a 'third messenger' substrate of protein kinase C-mediated molecular cascades during synaptic development and remodeling. Binds to calmodulin in the absence of calcium. The chain is Neurogranin (NRGN) from Bos taurus (Bovine).